Reading from the N-terminus, the 201-residue chain is MIEYIKGEIAELSPATAVIDCNGLGYAVNISLNTYSAIQGKSSCKLYIYEAIREDAYVLYGFADKQERELFLLLISVSGIGGNTARMILSALSPAELVNVISTENANMLKTVKGIGLKTAQRVIVDLKDKIKTGAMAATAVGGAAGALLPAMNAEVQEEAIAALTMLGFAAAPSQKAVLAILKEEPDAPVEKVIKLALKRL.

The tract at residues 1–63 (MIEYIKGEIA…EDAYVLYGFA (63 aa)) is domain I. Residues 64–142 (DKQERELFLL…TGAMAATAVG (79 aa)) form a domain II region. Residues 143-153 (GAAGALLPAMN) form a flexible linker region. The interval 153–201 (NAEVQEEAIAALTMLGFAAAPSQKAVLAILKEEPDAPVEKVIKLALKRL) is domain III.

This sequence belongs to the RuvA family. As to quaternary structure, homotetramer. Forms an RuvA(8)-RuvB(12)-Holliday junction (HJ) complex. HJ DNA is sandwiched between 2 RuvA tetramers; dsDNA enters through RuvA and exits via RuvB. An RuvB hexamer assembles on each DNA strand where it exits the tetramer. Each RuvB hexamer is contacted by two RuvA subunits (via domain III) on 2 adjacent RuvB subunits; this complex drives branch migration. In the full resolvosome a probable DNA-RuvA(4)-RuvB(12)-RuvC(2) complex forms which resolves the HJ.

The protein localises to the cytoplasm. The RuvA-RuvB-RuvC complex processes Holliday junction (HJ) DNA during genetic recombination and DNA repair, while the RuvA-RuvB complex plays an important role in the rescue of blocked DNA replication forks via replication fork reversal (RFR). RuvA specifically binds to HJ cruciform DNA, conferring on it an open structure. The RuvB hexamer acts as an ATP-dependent pump, pulling dsDNA into and through the RuvAB complex. HJ branch migration allows RuvC to scan DNA until it finds its consensus sequence, where it cleaves and resolves the cruciform DNA. The chain is Holliday junction branch migration complex subunit RuvA from Bacteroides fragilis (strain ATCC 25285 / DSM 2151 / CCUG 4856 / JCM 11019 / LMG 10263 / NCTC 9343 / Onslow / VPI 2553 / EN-2).